The following is a 968-amino-acid chain: Pumilio homolog 1 (968 aa).

2 disordered regions span residues 1–25 and 138–171; these read MIPELGRRPMHRGNEDSSFGDDYEK and NNVLGGVGDRRKVNDNRSLFSMPPGFEGEKTGAS. Residue Ser194 is modified to Phosphoserine. Disordered regions lie at residues 204–240, 260–303, and 360–382; these read GHGHPVAQQPSRPASRNTFDENVDSNNNLSPSASQGI, GTPD…VTSG, and KSDQAHKATGSLRNSQLRGPHGS. Composition is skewed to polar residues over residues 211 to 220 and 227 to 238; these read QQPSRPASRN and DSNNNLSPSASQ. Residue Thr261 is modified to Phosphothreonine. Residues 291–303 show a composition bias toward polar residues; sequence TSNQSPFNGVTSG. Residues 610-950 form the PUM-HD domain; sequence FGSSMLEEFK…HVVARIEKLV (341 aa). Pumilio repeat units follow at residues 630–665, 666–701, 702–737, 738–773, 774–810, 811–846, 847–882, and 883–924; these read EIAGHVVEFSSDQYGSRFIQQKLETATTDEKNMVYE, EIMPQALVLMTDVFGNYVIQKFFEHGLPPQRRELAE, KLFDHVLPLSLQMYGCRVIQKAIEVVDLDQKIKMVK, ELDGHVMRCVRDQNGNHVVQKCIECVPEENIEFIIS, TFFGHVVTLSTHPYGCRVIQRVLEHCHDPDTQSKVME, EILSTVSMLAQDQYGNYVVQHVLEHGKPDERTVIIK, ELAGKIVQMSQQKFASNVVEKCLTFGGPEERELLVN, and EMLG…LILT.

The protein localises to the cytoplasm. Functionally, sequence-specific RNA-binding protein that regulates translation and mRNA stability by binding the 3'-UTR of target mRNAs. Binds the APUM-binding elements (APBEs) in the 3'-UTR mRNA sequence of CLV1, PNH, WUS and FAS2. The chain is Pumilio homolog 1 (APUM1) from Arabidopsis thaliana (Mouse-ear cress).